The sequence spans 365 residues: Putative glycosyltransferase C06E1.7 (365 aa).

The protein belongs to the glycosyltransferase 11 family.

In Caenorhabditis elegans, this protein is Putative glycosyltransferase C06E1.7.